Reading from the N-terminus, the 400-residue chain is MKNIVVTPMTFEPVYEQDAEIVERKGIGHPDTICDYLAEELSVALSKLYIERFGAIMHHNVDKALLVGGEANPVFGGGEVISPIEIYLVGRALKEYKGVTIPAEELAIEVAREWLKDNIRNLDPDTHVIIKPRIKPGSKDLVDLFLRFQQKGEVPLANDTSFGVGFAPLDDLERIVFETEQLLNSPSFKENHPYVGEDIKVMGVRIKDKVRITIACAFVSKYVENIQDYLEKKEHVRRIVEEMAQGLTQRQVEVFINTADDPERESVYITVTGTSAEQGDDGQVGRGNRVNGLITPYRPMSLEAAAGKNPVSHIGKIYNVVANVIADRVVSEIEEVEEAYCYLVSQIGKPINEPQVCDVKVRTKKDLKSLEEEIKRIAQEELEKMPETWKKFLNREYAVA.

Residue 135–140 (KPGSKD) coordinates ATP.

This sequence belongs to the AdoMet synthase 2 family. Mg(2+) serves as cofactor.

The enzyme catalyses L-methionine + ATP + H2O = S-adenosyl-L-methionine + phosphate + diphosphate. The protein operates within amino-acid biosynthesis; S-adenosyl-L-methionine biosynthesis; S-adenosyl-L-methionine from L-methionine: step 1/1. In terms of biological role, catalyzes the formation of S-adenosylmethionine from methionine and ATP. The chain is Probable S-adenosylmethionine synthase (mat) from Aquifex aeolicus (strain VF5).